Here is a 139-residue protein sequence, read N- to C-terminus: Interleukin-5 (139 aa).

An N-terminal signal peptide occupies residues 1 to 19 (MMKILVCLPLLTLYAGCVY). N-linked (GlcNAc...) asparagine glycans are attached at residues Asn48, Asn77, and Asn91.

Belongs to the IL-5 family. As to quaternary structure, homodimer; disulfide-linked. Interacts with IL5RA. Interacts with CSF2RB.

It localises to the secreted. Functionally, homodimeric cytokine expressed predominantly by T-lymphocytes and NK cells that plays an important role in the survival, differentiation, and chemotaxis of eosinophils. Also acts on activated and resting B-cells to induce immunoglobulin production, growth, and differentiation. Mechanistically, exerts its biological effects through a receptor composed of IL5RA subunit and the cytokine receptor common subunit beta/CSF2RB. Binding to the receptor leads to activation of various kinases including LYN, SYK and JAK2 and thereby propagates signals through the RAS-MAPK and JAK-STAT5 pathways respectively. The chain is Interleukin-5 (IL5) from Notamacropus eugenii (Tammar wallaby).